Reading from the N-terminus, the 461-residue chain is Mitochondrial distribution and morphology protein 12 (461 aa).

One can recognise an SMP-LTD domain in the interval 1–454; it reads MSLDLDWNLL…YPNYYTIDLP (454 aa). Disordered regions lie at residues 75–104 and 226–301; these read RRRG…VHHG and DASS…PSSA. Composition is skewed to polar residues over residues 80-97 and 272-288; these read RQTT…SPTD and RATS…QNSP.

It belongs to the MDM12 family. As to quaternary structure, component of the ER-mitochondria encounter structure (ERMES) or MDM complex, composed of MMM1, MDM10, MDM12 and MDM34. An MMM1 homodimer associates with one molecule of MDM12 on each side in a pairwise head-to-tail manner, and the SMP-LTD domains of MMM1 and MDM12 generate a continuous hydrophobic tunnel for phospholipid trafficking.

Its subcellular location is the mitochondrion outer membrane. It is found in the endoplasmic reticulum membrane. Its function is as follows. Component of the ERMES/MDM complex, which serves as a molecular tether to connect the endoplasmic reticulum (ER) and mitochondria. Components of this complex are involved in the control of mitochondrial shape and protein biogenesis, and function in nonvesicular lipid trafficking between the ER and mitochondria. MDM12 is required for the interaction of the ER-resident membrane protein MMM1 and the outer mitochondrial membrane-resident beta-barrel protein MDM10. The MDM12-MMM1 subcomplex functions in the major beta-barrel assembly pathway that is responsible for biogenesis of all mitochondrial outer membrane beta-barrel proteins, and acts in a late step after the SAM complex. The MDM10-MDM12-MMM1 subcomplex further acts in the TOM40-specific pathway after the action of the MDM12-MMM1 complex. Essential for establishing and maintaining the structure of mitochondria and maintenance of mtDNA nucleoids. In Mycosarcoma maydis (Corn smut fungus), this protein is Mitochondrial distribution and morphology protein 12.